Here is a 408-residue protein sequence, read N- to C-terminus: Ribosomal RNA large subunit methyltransferase DR_0049 (408 aa).

This sequence belongs to the methyltransferase superfamily.

It catalyses the reaction cytidine(2499) in 23S rRNA + S-adenosyl-L-methionine = 5-methylcytidine(2499) in 23S rRNA + S-adenosyl-L-homocysteine + H(+). Specifically methylates the cytosine at position 2499 (m5C2499) of 23S rRNA. The sequence is that of Ribosomal RNA large subunit methyltransferase DR_0049 from Deinococcus radiodurans (strain ATCC 13939 / DSM 20539 / JCM 16871 / CCUG 27074 / LMG 4051 / NBRC 15346 / NCIMB 9279 / VKM B-1422 / R1).